The chain runs to 960 residues: FYVE, RhoGEF and PH domain-containing protein 1 (960 aa).

Disordered regions lie at residues 1–210 (MHGH…SSAA) and 226–355 (ASDR…REIP). At S48 the chain carries Phosphoserine. A compositionally biased stretch (basic and acidic residues) spans 125-135 (PHPEGPQRLRS). 3 stretches are compositionally biased toward pro residues: residues 137–149 (PGPPTEIPGPRPS), 156–165 (GPKPQVPPKP), and 173–190 (VLPPPEPIPPPPSRPLPA). Residues 171 to 187 (PRVLPPPEPIPPPPSRP) carry the SH3-binding motif. Phosphoserine is present on S205. Over residues 231–251 (APGPCPVPPEPAMLPQPPPQP) the composition is skewed to pro residues. A compositionally biased stretch (basic and acidic residues) spans 273 to 284 (RDGEKVPNRDSG). A compositionally biased stretch (low complexity) spans 285-294 (IDSISSPSNS). Over residues 335 to 350 (VDSDLEEEEEEEEEEK) the composition is skewed to acidic residues. Residues 372–560 (KVFHIANELL…ATAAEHSNAA (189 aa)) form the DH domain. The PH 1 domain maps to 589-688 (ELIKEGHILK…WVQAINSTLL (100 aa)). Residues 701–725 (NSTNRDDEDTPPNSPNVDLGKRAPT) are disordered. T710 carries the phosphothreonine modification. Phosphoserine is present on S714. The FYVE-type zinc finger occupies 729 to 789 (EKEVTMCMRC…VCTDCYVALH (61 aa)). Positions 735, 738, 752, 755, 760, 763, 781, and 784 each coordinate Zn(2+). Residues 820–920 (NSVICSFLHY…WMAVLGRAGR (101 aa)) enclose the PH 2 domain. The disordered stretch occupies residues 922-960 (DTFCPGPTLSEDKEMEETPVAASGATAEPPEASQTRDKT).

Interacts with DBNL/ABP1 and CTTN. Binds CDC42. May interact with CCPG1.

It is found in the cytoplasm. Its subcellular location is the cell projection. The protein resides in the lamellipodium. The protein localises to the ruffle. It localises to the cytoskeleton. In terms of biological role, activates CDC42, a member of the Ras-like family of Rho- and Rac proteins, by exchanging bound GDP for free GTP. Plays a role in regulating the actin cytoskeleton and cell shape. This chain is FYVE, RhoGEF and PH domain-containing protein 1 (Fgd1), found in Mus musculus (Mouse).